The sequence spans 677 residues: Methionine--tRNA ligase (677 aa).

The 'HIGH' region motif lies at 15-25 (PYANGSIHLGH). Zn(2+)-binding residues include Cys146, Cys149, Cys159, and Cys162. The 'KMSKS' region motif lies at 333–337 (KMSKS). Lys336 contacts ATP. A tRNA-binding domain is found at 575-677 (DFAKVDLRVA…AGAKPGHQVK (103 aa)).

Belongs to the class-I aminoacyl-tRNA synthetase family. MetG type 1 subfamily. In terms of assembly, homodimer. Requires Zn(2+) as cofactor.

It localises to the cytoplasm. The catalysed reaction is tRNA(Met) + L-methionine + ATP = L-methionyl-tRNA(Met) + AMP + diphosphate. Is required not only for elongation of protein synthesis but also for the initiation of all mRNA translation through initiator tRNA(fMet) aminoacylation. This is Methionine--tRNA ligase from Escherichia coli O127:H6 (strain E2348/69 / EPEC).